A 330-amino-acid polypeptide reads, in one-letter code: CRISPR-associated endonuclease Cas1 2 (330 aa).

Mn(2+) is bound by residues E156, H222, and E237.

It belongs to the CRISPR-associated endonuclease Cas1 family. As to quaternary structure, homodimer, forms a heterotetramer with a Cas2 homodimer. Mg(2+) serves as cofactor. Requires Mn(2+) as cofactor.

Its function is as follows. CRISPR (clustered regularly interspaced short palindromic repeat), is an adaptive immune system that provides protection against mobile genetic elements (viruses, transposable elements and conjugative plasmids). CRISPR clusters contain spacers, sequences complementary to antecedent mobile elements, and target invading nucleic acids. CRISPR clusters are transcribed and processed into CRISPR RNA (crRNA). Acts as a dsDNA endonuclease. Involved in the integration of spacer DNA into the CRISPR cassette. The sequence is that of CRISPR-associated endonuclease Cas1 2 from Thermodesulfovibrio yellowstonii (strain ATCC 51303 / DSM 11347 / YP87).